The sequence spans 256 residues: Acetylglutamate kinase (256 aa).

Substrate is bound by residues G40 to G41, R62, and N154.

The protein belongs to the acetylglutamate kinase family. ArgB subfamily.

It localises to the cytoplasm. The catalysed reaction is N-acetyl-L-glutamate + ATP = N-acetyl-L-glutamyl 5-phosphate + ADP. The protein operates within amino-acid biosynthesis; L-arginine biosynthesis; N(2)-acetyl-L-ornithine from L-glutamate: step 2/4. Its function is as follows. Catalyzes the ATP-dependent phosphorylation of N-acetyl-L-glutamate. In Staphylococcus aureus (strain MRSA252), this protein is Acetylglutamate kinase.